The sequence spans 574 residues: Sulfate adenylyltransferase (574 aa).

The interval 1–169 is N-terminal; sequence MSNPPHGGVL…VEAINKLNHY (169 aa). A catalytic region spans residues 170-394; it reads DYVALRYTPA…LRESSRPRST (225 aa). Sulfate is bound at residue Gln-197. ATP-binding positions include 197–200 and 291–294; these read QTRN and GRDH. Active-site residues include Thr-198, Arg-199, and Asn-200. Arg-199 provides a ligand contact to sulfate. Ala-295 is a binding site for sulfate. Val-333 is a binding site for ATP. An allosteric regulation domain; adenylyl-sulfate kinase-like region spans residues 395–574; sequence QGFTIFLTGY…LETEGFFDRA (180 aa). 3'-phosphoadenylyl sulfate is bound by residues 434–437, Arg-451, 477–478, and Arg-516; these read DTVR and IA.

In the N-terminal section; belongs to the sulfate adenylyltransferase family. It in the C-terminal section; belongs to the APS kinase family. Homohexamer. Dimer of trimers.

It is found in the cytoplasm. It catalyses the reaction sulfate + ATP + H(+) = adenosine 5'-phosphosulfate + diphosphate. Its pathway is sulfur metabolism; hydrogen sulfide biosynthesis; sulfite from sulfate: step 1/3. With respect to regulation, allosterically inhibited by 3'-phosphoadenosine 5'-phosphosulfate (PAPS). Catalyzes the first intracellular reaction of sulfate assimilation, forming adenosine-5'-phosphosulfate (APS) from inorganic sulfate and ATP. Plays an important role in sulfate activation as a component of the biosynthesis pathway of sulfur-containing amino acids. The protein is Sulfate adenylyltransferase of Aspergillus clavatus (strain ATCC 1007 / CBS 513.65 / DSM 816 / NCTC 3887 / NRRL 1 / QM 1276 / 107).